Consider the following 461-residue polypeptide: Cysteine--tRNA ligase (461 aa).

A Zn(2+)-binding site is contributed by Cys-28. Positions 30–40 (ITVYDLCHIGH) match the 'HIGH' region motif. Zn(2+) contacts are provided by Cys-209, His-234, and Glu-238. The short motif at 266–270 (KMSKS) is the 'KMSKS' region element. Residue Lys-269 participates in ATP binding.

This sequence belongs to the class-I aminoacyl-tRNA synthetase family. Monomer. Zn(2+) serves as cofactor.

Its subcellular location is the cytoplasm. It catalyses the reaction tRNA(Cys) + L-cysteine + ATP = L-cysteinyl-tRNA(Cys) + AMP + diphosphate. This Escherichia coli O127:H6 (strain E2348/69 / EPEC) protein is Cysteine--tRNA ligase.